The following is a 372-amino-acid chain: N-methyl-L-tryptophan oxidase (372 aa).

FAD is bound at residue 4 to 34; that stretch reads DLIIIGSGSVGAAAGYYATRAGLNVLMTDAH. The residue at position 308 (C308) is an S-8alpha-FAD cysteine.

It belongs to the MSOX/MTOX family. MTOX subfamily. Monomer. FAD is required as a cofactor.

It carries out the reaction N(alpha)-methyl-L-tryptophan + O2 + H2O = L-tryptophan + formaldehyde + H2O2. Functionally, catalyzes the oxidative demethylation of N-methyl-L-tryptophan. The chain is N-methyl-L-tryptophan oxidase from Shigella flexneri serotype 5b (strain 8401).